Reading from the N-terminus, the 652-residue chain is Acetyl-coenzyme A synthetase (652 aa).

CoA is bound by residues 191-194 (RAGR), T311, and N335. ATP is bound by residues 387–389 (GEP), 411–416 (DTWWQT), D500, and R515. S523 serves as a coordination point for CoA. R526 provides a ligand contact to ATP. Positions 537, 539, and 542 each coordinate Mg(2+). R584 is a binding site for CoA. N6-acetyllysine is present on K609.

The protein belongs to the ATP-dependent AMP-binding enzyme family. It depends on Mg(2+) as a cofactor. Post-translationally, acetylated. Deacetylation by the SIR2-homolog deacetylase activates the enzyme.

It catalyses the reaction acetate + ATP + CoA = acetyl-CoA + AMP + diphosphate. Catalyzes the conversion of acetate into acetyl-CoA (AcCoA), an essential intermediate at the junction of anabolic and catabolic pathways. Acs undergoes a two-step reaction. In the first half reaction, Acs combines acetate with ATP to form acetyl-adenylate (AcAMP) intermediate. In the second half reaction, it can then transfer the acetyl group from AcAMP to the sulfhydryl group of CoA, forming the product AcCoA. Its function is as follows. Enables the cell to use acetate during aerobic growth to generate energy via the TCA cycle, and biosynthetic compounds via the glyoxylate shunt. Acetylates CheY, the response regulator involved in flagellar movement and chemotaxis. The protein is Acetyl-coenzyme A synthetase of Escherichia coli O6:H1 (strain CFT073 / ATCC 700928 / UPEC).